A 61-amino-acid chain; its full sequence is Small ribosomal subunit protein uS14 (61 aa).

Positions 24, 27, 40, and 43 each coordinate Zn(2+).

Belongs to the universal ribosomal protein uS14 family. Zinc-binding uS14 subfamily. As to quaternary structure, part of the 30S ribosomal subunit. Contacts proteins S3 and S10. It depends on Zn(2+) as a cofactor.

In terms of biological role, binds 16S rRNA, required for the assembly of 30S particles and may also be responsible for determining the conformation of the 16S rRNA at the A site. This Desulfosudis oleivorans (strain DSM 6200 / JCM 39069 / Hxd3) (Desulfococcus oleovorans) protein is Small ribosomal subunit protein uS14.